The sequence spans 99 residues: Plastocyanin (99 aa).

The Plastocyanin-like domain occupies 1–99; it reads VEVLMGGSGG…IGMSGIVTVN (99 aa). H37, C84, H87, and M92 together coordinate Cu cation.

It belongs to the plastocyanin family. The cofactor is Cu(2+).

It localises to the plastid. It is found in the chloroplast thylakoid membrane. Functionally, participates in electron transfer between P700 and the cytochrome b6-f complex in photosystem I. In Ginkgo biloba (Ginkgo), this protein is Plastocyanin (PETE).